A 433-amino-acid polypeptide reads, in one-letter code: Elongation factor 1-alpha (433 aa).

Positions 5–220 (KPHINVVFIG…ALDMLKPPQL (216 aa)) constitute a tr-type G domain. The segment at 14–21 (GHVDHGKS) is G1. 14–21 (GHVDHGKS) contacts GTP. Ser-21 is a binding site for Mg(2+). The G2 stretch occupies residues 70–74 (GVTID). Positions 91-94 (DAPG) are G3. GTP contacts are provided by residues 91-95 (DAPGH) and 146-149 (NKMD). The tract at residues 146-149 (NKMD) is G4. Residues 186-188 (ASF) form a G5 region.

The protein belongs to the TRAFAC class translation factor GTPase superfamily. Classic translation factor GTPase family. EF-Tu/EF-1A subfamily.

It localises to the cytoplasm. It carries out the reaction GTP + H2O = GDP + phosphate + H(+). Its function is as follows. GTP hydrolase that promotes the GTP-dependent binding of aminoacyl-tRNA to the A-site of ribosomes during protein biosynthesis. In Nanoarchaeum equitans (strain Kin4-M), this protein is Elongation factor 1-alpha.